The following is a 229-amino-acid chain: Potassium/proton antiporter CemA (229 aa).

The next 4 helical transmembrane spans lie at 7–27, 114–134, 154–174, and 189–209; these read FTPLLYLASIVFLPWWISLSF, LICFVILSGYSILGNEELLIL, ILLLTDLCIGFHSPHGWELMI, and IISGLVSTFPVILDTIFKYWI.

It belongs to the CemA family.

It localises to the plastid. The protein localises to the chloroplast inner membrane. It carries out the reaction K(+)(in) + H(+)(out) = K(+)(out) + H(+)(in). Functionally, contributes to K(+)/H(+) antiport activity by supporting proton efflux to control proton extrusion and homeostasis in chloroplasts in a light-dependent manner to modulate photosynthesis. Prevents excessive induction of non-photochemical quenching (NPQ) under continuous-light conditions. Indirectly promotes efficient inorganic carbon uptake into chloroplasts. The sequence is that of Potassium/proton antiporter CemA from Gossypium barbadense (Sea Island cotton).